Consider the following 246-residue polypeptide: Apolipoprotein L domain-containing protein 1 (246 aa).

2 consecutive transmembrane segments (helical) span residues 50-72 (SLAA…IVGL) and 89-109 (GLGV…SLIF). The stretch at 193–220 (LKAKIQKLSESLESCTGALDELSEQLES) forms a coiled coil.

This sequence belongs to the apolipoprotein L family. In terms of tissue distribution, present at low levels in brain vascular cells (at protein level).

It is found in the cell membrane. Its subcellular location is the cell junction. It localises to the cytoplasmic vesicle. The protein resides in the secretory vesicle. Is a modulator of endothelial barrier permeability, required for proper organization of endothelial cell-cell junctions and cytoskeleton. It also plays a role in the modulation of secretory autophagy. May affect blood-brain barrier permeability. The polypeptide is Apolipoprotein L domain-containing protein 1 (Apold1) (Rattus norvegicus (Rat)).